The following is a 442-amino-acid chain: 6-phospho-alpha-glucosidase 1 (442 aa).

6-72 (FSVLIAGGGS…PEVEFLATTD (67 aa)) lines the NAD(+) pocket. Substrate contacts are provided by Arg95 and Asn149. Mn(2+) is bound at residue Cys171. The active-site Proton donor is the Asp172. His202 serves as a coordination point for Mn(2+). Catalysis depends on Tyr265, which acts as the Proton acceptor. Residue Arg285 participates in substrate binding.

The protein belongs to the glycosyl hydrolase 4 family. Homodimer. May also form homotetramer. The cofactor is Mn(2+). Co(2+) serves as cofactor. Ni(2+) is required as a cofactor. It depends on Fe(2+) as a cofactor. Requires Mg(2+) as cofactor. The cofactor is NAD(+).

The catalysed reaction is alpha-maltose 6'-phosphate + H2O = D-glucose 6-phosphate + D-glucose. With respect to regulation, is inhibited by EDTA in vitro. Functionally, is probably involved in the catabolism of alpha-glycosides accumulated via a phosphoenolpyruvate-dependent phosphotransferase system (PEP-PTS). Hydrolyzes a wide variety of 6-phospho-alpha-D-glucosides including the five isomeric derivatives of sucrose, i.e. trehalulose-6'-phosphate, turanose-6'-phosphate, maltulose-6'-phosphate, leucrose-6'-phosphate, and palatinose-6'-phosphate, but is not active on sucrose-6-phosphate. Can also hydrolyze maltose-6'-phosphate and methyl-alpha-glucose-6-phosphate, and poorly, trehalose-6-phosphate. Fails to hydrolyze beta-O-linked phosphorylated disaccharides such as cellobiose-6'-phosphate and gentiobiose-6'-phosphate. Does not seem to be involved in maltose catabolism. The sequence is that of 6-phospho-alpha-glucosidase 1 (simA) from Lacticaseibacillus paracasei (strain ATCC 334 / BCRC 17002 / CCUG 31169 / CIP 107868 / KCTC 3260 / NRRL B-441) (Lactobacillus paracasei).